The sequence spans 346 residues: Dihydroorotase (346 aa).

The Zn(2+) site is built by histidine 14 and histidine 16. Substrate contacts are provided by residues 16–18 (HLR) and asparagine 42. Zn(2+) is bound by residues lysine 100, histidine 137, and histidine 175. Residue lysine 100 is modified to N6-carboxylysine. Histidine 137 contacts substrate. Position 220 (leucine 220) interacts with substrate. Aspartate 248 contributes to the Zn(2+) binding site. Aspartate 248 is an active-site residue. Substrate contacts are provided by histidine 252 and alanine 264.

The protein belongs to the metallo-dependent hydrolases superfamily. DHOase family. Class II DHOase subfamily. Homodimer. Zn(2+) is required as a cofactor.

It carries out the reaction (S)-dihydroorotate + H2O = N-carbamoyl-L-aspartate + H(+). The protein operates within pyrimidine metabolism; UMP biosynthesis via de novo pathway; (S)-dihydroorotate from bicarbonate: step 3/3. Catalyzes the reversible cyclization of carbamoyl aspartate to dihydroorotate. The chain is Dihydroorotase from Cereibacter sphaeroides (strain ATCC 17025 / ATH 2.4.3) (Rhodobacter sphaeroides).